Consider the following 115-residue polypeptide: Variant surface glycoprotein ANTAT 1.8 (115 aa).

Asn-42 is a glycosylation site (N-linked (GlcNAc...) asparagine). Residue Asp-92 is the site of GPI-anchor amidated aspartate attachment. A propeptide spans 93–115 (SSILVNKQLALSVVSAAFAALLF) (removed in mature form).

It is found in the cell membrane. Its function is as follows. VSG forms a coat on the surface of the parasite. The trypanosome evades the immune response of the host by expressing a series of antigenically distinct VSGs from an estimated 1000 VSG genes. The polypeptide is Variant surface glycoprotein ANTAT 1.8 (Trypanosoma brucei brucei).